A 247-amino-acid chain; its full sequence is 3,4-dihydroxy-2-butanone 4-phosphate synthase (247 aa).

Residues 38 to 39 (RE), D43, 179 to 183 (RMGQT), and E203 contribute to the D-ribulose 5-phosphate site. Residue E39 participates in Mg(2+) binding.

Belongs to the DHBP synthase family. In terms of assembly, homodimer. The cofactor is Mg(2+). Mn(2+) is required as a cofactor.

It catalyses the reaction D-ribulose 5-phosphate = (2S)-2-hydroxy-3-oxobutyl phosphate + formate + H(+). Its pathway is cofactor biosynthesis; riboflavin biosynthesis; 2-hydroxy-3-oxobutyl phosphate from D-ribulose 5-phosphate: step 1/1. In terms of biological role, catalyzes the conversion of D-ribulose 5-phosphate to formate and 3,4-dihydroxy-2-butanone 4-phosphate. The sequence is that of 3,4-dihydroxy-2-butanone 4-phosphate synthase from Methanosarcina acetivorans (strain ATCC 35395 / DSM 2834 / JCM 12185 / C2A).